We begin with the raw amino-acid sequence, 399 residues long: 4-hydroxy-3-methylbut-2-enyl diphosphate reductase (399 aa).

Residue C66 coordinates [4Fe-4S] cluster. H96 contributes to the (2E)-4-hydroxy-3-methylbut-2-enyl diphosphate binding site. H96 contacts dimethylallyl diphosphate. Position 96 (H96) interacts with isopentenyl diphosphate. C157 contributes to the [4Fe-4S] cluster binding site. H185 serves as a coordination point for (2E)-4-hydroxy-3-methylbut-2-enyl diphosphate. A dimethylallyl diphosphate-binding site is contributed by H185. H185 provides a ligand contact to isopentenyl diphosphate. The active-site Proton donor is the E187. A (2E)-4-hydroxy-3-methylbut-2-enyl diphosphate-binding site is contributed by T250. C288 is a [4Fe-4S] cluster binding site. The (2E)-4-hydroxy-3-methylbut-2-enyl diphosphate site is built by S317, S318, N319, and S380. S317, S318, N319, and S380 together coordinate dimethylallyl diphosphate. Positions 317, 318, 319, and 380 each coordinate isopentenyl diphosphate.

The protein belongs to the IspH family. Requires [4Fe-4S] cluster as cofactor.

The catalysed reaction is isopentenyl diphosphate + 2 oxidized [2Fe-2S]-[ferredoxin] + H2O = (2E)-4-hydroxy-3-methylbut-2-enyl diphosphate + 2 reduced [2Fe-2S]-[ferredoxin] + 2 H(+). The enzyme catalyses dimethylallyl diphosphate + 2 oxidized [2Fe-2S]-[ferredoxin] + H2O = (2E)-4-hydroxy-3-methylbut-2-enyl diphosphate + 2 reduced [2Fe-2S]-[ferredoxin] + 2 H(+). It functions in the pathway isoprenoid biosynthesis; dimethylallyl diphosphate biosynthesis; dimethylallyl diphosphate from (2E)-4-hydroxy-3-methylbutenyl diphosphate: step 1/1. Its pathway is isoprenoid biosynthesis; isopentenyl diphosphate biosynthesis via DXP pathway; isopentenyl diphosphate from 1-deoxy-D-xylulose 5-phosphate: step 6/6. In terms of biological role, catalyzes the conversion of 1-hydroxy-2-methyl-2-(E)-butenyl 4-diphosphate (HMBPP) into a mixture of isopentenyl diphosphate (IPP) and dimethylallyl diphosphate (DMAPP). Acts in the terminal step of the DOXP/MEP pathway for isoprenoid precursor biosynthesis. The sequence is that of 4-hydroxy-3-methylbut-2-enyl diphosphate reductase from Synechococcus sp. (strain CC9902).